The sequence spans 293 residues: Ribosomal protein L11 methyltransferase (293 aa).

S-adenosyl-L-methionine contacts are provided by threonine 145, glycine 166, aspartate 188, and asparagine 230.

Belongs to the methyltransferase superfamily. PrmA family.

Its subcellular location is the cytoplasm. It catalyses the reaction L-lysyl-[protein] + 3 S-adenosyl-L-methionine = N(6),N(6),N(6)-trimethyl-L-lysyl-[protein] + 3 S-adenosyl-L-homocysteine + 3 H(+). Its function is as follows. Methylates ribosomal protein L11. The protein is Ribosomal protein L11 methyltransferase of Haemophilus ducreyi (strain 35000HP / ATCC 700724).